The chain runs to 177 residues: MKLILRADVDALGSLGDIVTVKAGYGRNYLIPQGLAMPASEANLKQFELEKRKLQEMADNLRTQAEGLRDKLAEVEVKIEVRVGEGDKLYGSVTAVNIADALAEMDFDIDRRKILLSDPIRSLGEYDIEIKLHPEVRGEVKLVVAKVGGPVEEEPAEEVEAPAETEVAEDAEEATEA.

A disordered region spans residues 151 to 177 (VEEEPAEEVEAPAETEVAEDAEEATEA).

The protein belongs to the bacterial ribosomal protein bL9 family.

Its function is as follows. Binds to the 23S rRNA. The protein is Large ribosomal subunit protein bL9 of Maridesulfovibrio salexigens (strain ATCC 14822 / DSM 2638 / NCIMB 8403 / VKM B-1763) (Desulfovibrio salexigens).